A 199-amino-acid polypeptide reads, in one-letter code: Recombination protein RecR (199 aa).

The C4-type zinc-finger motif lies at 56–71 (CQVCFHLSAESTCEIC). Positions 79–173 (QTLCVVADSR…KVTRIAFGLP (95 aa)) constitute a Toprim domain.

This sequence belongs to the RecR family.

May play a role in DNA repair. It seems to be involved in an RecBC-independent recombinational process of DNA repair. It may act with RecF and RecO. This is Recombination protein RecR from Gloeothece citriformis (strain PCC 7424) (Cyanothece sp. (strain PCC 7424)).